The chain runs to 347 residues: P2Y purinoceptor 12 (347 aa).

The Extracellular portion of the chain corresponds to 1 to 33 (MDVPGVNTTSANTTFSPGTSTLCVRDYKITQVL). Residues Asn-7 and Asn-12 are each glycosylated (N-linked (GlcNAc...) asparagine). 2 disulfide bridges follow: Cys-23/Cys-276 and Cys-103/Cys-181. A helical membrane pass occupies residues 34–56 (FPLLYTVLFFAGLITNSLAMRIF). Over 57–67 (FQIRSKSNFII) the chain is Cytoplasmic. Phosphoserine occurs at positions 61 and 63. The chain crosses the membrane as a helical span at residues 68 to 88 (FLKNTVISDLLMILTFPFKIL). The Extracellular segment spans residues 89-103 (SDAKLGAGPLRTLVC). Residues Arg-99, Cys-103, and Tyr-111 each coordinate ADP. A helical membrane pass occupies residues 104 to 124 (QVTSVTFYFTMYISISFLGLI). Residues 125 to 148 (TIDRYLKTTRPFKTSSPSNLLGAK) lie on the Cytoplasmic side of the membrane. The helical transmembrane segment at 149–168 (ILSVVIWAFMFLISLPNMIL) threads the bilayer. ADP is bound by residues 162–165 (SLPN), 181–185 (CSFLK), His-193, and Asn-197. Topologically, residues 169-191 (TNRRPKDKDVTKCSFLKSEFGLV) are extracellular. A helical transmembrane segment spans residues 192–213 (WHEIVNYICQVIFWINFLIVIV). The Cytoplasmic portion of the chain corresponds to 214-239 (CYSLITKELYRSYVRTRGSAKVPKKK). A helical membrane pass occupies residues 240 to 265 (VNVKVFIIIAVFFICFVPFHFARIPY). Residues 262-265 (RIPY), Gln-269, and Lys-286 each bind ADP. Over 266 to 284 (TLSQTRAVFDCSAENTLFY) the chain is Extracellular. Residues 285–304 (VKESTLWLTSLNACLDPFIY) traverse the membrane as a helical segment. Residues 305 to 347 (FFLCKSFRNSLTSMLRCSNSTSTSGTNKKKGQEGGEPSEETPM) are Cytoplasmic-facing. Residues 321–347 (CSNSTSTSGTNKKKGQEGGEPSEETPM) form a disordered region.

The protein belongs to the G-protein coupled receptor 1 family.

It is found in the cell membrane. In terms of biological role, receptor for ADP and ATP coupled to G-proteins that inhibit the adenylyl cyclase second messenger system. Required for normal platelet aggregation and blood coagulation. The polypeptide is P2Y purinoceptor 12 (P2ry12) (Mus musculus (Mouse)).